The sequence spans 160 residues: 6,7-dimethyl-8-ribityllumazine synthase (160 aa).

Residues tryptophan 27, 59–61, and 81–83 each bind 5-amino-6-(D-ribitylamino)uracil; these read AIE and VVI. A (2S)-2-hydroxy-3-oxobutyl phosphate-binding site is contributed by 86-87; the sequence is QT. Histidine 89 acts as the Proton donor in catalysis. Residue asparagine 114 coordinates 5-amino-6-(D-ribitylamino)uracil. Position 128 (arginine 128) interacts with (2S)-2-hydroxy-3-oxobutyl phosphate.

It belongs to the DMRL synthase family. As to quaternary structure, homopentamer.

The catalysed reaction is (2S)-2-hydroxy-3-oxobutyl phosphate + 5-amino-6-(D-ribitylamino)uracil = 6,7-dimethyl-8-(1-D-ribityl)lumazine + phosphate + 2 H2O + H(+). It functions in the pathway cofactor biosynthesis; riboflavin biosynthesis; riboflavin from 2-hydroxy-3-oxobutyl phosphate and 5-amino-6-(D-ribitylamino)uracil: step 1/2. Catalyzes the formation of 6,7-dimethyl-8-ribityllumazine by condensation of 5-amino-6-(D-ribitylamino)uracil with 3,4-dihydroxy-2-butanone 4-phosphate. This is the penultimate step in the biosynthesis of riboflavin. This Mycobacterium tuberculosis (strain CDC 1551 / Oshkosh) protein is 6,7-dimethyl-8-ribityllumazine synthase (ribH).